The primary structure comprises 383 residues: Succinyl-diaminopimelate desuccinylase (383 aa).

A Zn(2+)-binding site is contributed by histidine 73. Aspartate 75 is an active-site residue. Aspartate 107 contributes to the Zn(2+) binding site. The Proton acceptor role is filled by glutamate 141. Residues glutamate 142, glutamate 170, and histidine 356 each coordinate Zn(2+).

It belongs to the peptidase M20A family. DapE subfamily. As to quaternary structure, homodimer. It depends on Zn(2+) as a cofactor. The cofactor is Co(2+).

It catalyses the reaction N-succinyl-(2S,6S)-2,6-diaminopimelate + H2O = (2S,6S)-2,6-diaminopimelate + succinate. Its pathway is amino-acid biosynthesis; L-lysine biosynthesis via DAP pathway; LL-2,6-diaminopimelate from (S)-tetrahydrodipicolinate (succinylase route): step 3/3. In terms of biological role, catalyzes the hydrolysis of N-succinyl-L,L-diaminopimelic acid (SDAP), forming succinate and LL-2,6-diaminopimelate (DAP), an intermediate involved in the bacterial biosynthesis of lysine and meso-diaminopimelic acid, an essential component of bacterial cell walls. The sequence is that of Succinyl-diaminopimelate desuccinylase from Pseudomonas fluorescens (strain Pf0-1).